The primary structure comprises 508 residues: Lysine--tRNA ligase (508 aa).

Residues Glu418 and Glu425 each coordinate Mg(2+).

Belongs to the class-II aminoacyl-tRNA synthetase family. In terms of assembly, homodimer. It depends on Mg(2+) as a cofactor.

It localises to the cytoplasm. The enzyme catalyses tRNA(Lys) + L-lysine + ATP = L-lysyl-tRNA(Lys) + AMP + diphosphate. The sequence is that of Lysine--tRNA ligase from Burkholderia mallei (strain NCTC 10247).